Reading from the N-terminus, the 133-residue chain is DNA-directed RNA polymerase subunit omega (133 aa).

The protein belongs to the RNA polymerase subunit omega family. The RNAP catalytic core consists of 2 alpha, 1 beta, 1 beta' and 1 omega subunit. When a sigma factor is associated with the core the holoenzyme is formed, which can initiate transcription.

It carries out the reaction RNA(n) + a ribonucleoside 5'-triphosphate = RNA(n+1) + diphosphate. Promotes RNA polymerase assembly. Latches the N- and C-terminal regions of the beta' subunit thereby facilitating its interaction with the beta and alpha subunits. The polypeptide is DNA-directed RNA polymerase subunit omega (Mesorhizobium japonicum (strain LMG 29417 / CECT 9101 / MAFF 303099) (Mesorhizobium loti (strain MAFF 303099))).